The primary structure comprises 102 residues: Small ribosomal subunit protein uS10 (102 aa).

Belongs to the universal ribosomal protein uS10 family. In terms of assembly, part of the 30S ribosomal subunit.

Its function is as follows. Involved in the binding of tRNA to the ribosomes. The polypeptide is Small ribosomal subunit protein uS10 (Lactiplantibacillus plantarum (strain ATCC BAA-793 / NCIMB 8826 / WCFS1) (Lactobacillus plantarum)).